Consider the following 103-residue polypeptide: Large ribosomal subunit protein bL21 (103 aa).

The protein belongs to the bacterial ribosomal protein bL21 family. Part of the 50S ribosomal subunit. Contacts protein L20.

Its function is as follows. This protein binds to 23S rRNA in the presence of protein L20. This chain is Large ribosomal subunit protein bL21, found in Shewanella pealeana (strain ATCC 700345 / ANG-SQ1).